The chain runs to 446 residues: RUN domain-containing protein 3A (446 aa).

Residues 1-298 (MEASFVQTTM…LQLQLEEAAA (298 aa)) are interaction with RAP2A. Positions 52–189 (DDSSEEFVNF…IDFSFCLKGE (138 aa)) constitute an RUN domain. The residue at position 215 (Thr-215) is a Phosphothreonine. Residues 216–239 (DEEERHSAESSTSEDNSPEHPYLP) are disordered. Ser-232 bears the Phosphoserine mark. Residues 267–322 (YLEELVRLRESQLKDLEAENRRLQLQLEEAAAQNQREKRELEGVILELQEQLTGLI) are a coiled coil. Positions 372–384 (PLSAEASLSSDSQ) are enriched in polar residues. The interval 372–404 (PLSAEASLSSDSQRLGEGTRDEEPWGPIGKDPT) is disordered. A phosphoserine mark is found at Ser-416 and Ser-419.

Belongs to the RUNDC3 family. Interacts with the GTP-bound form of RAP2A.

In terms of biological role, may act as an effector of RAP2A in neuronal cells. The protein is RUN domain-containing protein 3A (RUNDC3A) of Homo sapiens (Human).